Reading from the N-terminus, the 296-residue chain is 4-amino-4-deoxyprephenate dehydrogenase (296 aa).

In terms of domain architecture, Prephenate/arogenate dehydrogenase spans 9–288 (RCVVVGGAGA…EHGAELERLC (280 aa)).

Belongs to the prephenate/arogenate dehydrogenase family.

It catalyses the reaction 4-amino-4-deoxyprephenate + NAD(+) = 3-(4-aminophenyl)pyruvate + CO2 + NADH + H(+). Its pathway is antibiotic biosynthesis. Functionally, involved in pristinamycin I biosynthesis. Probably catalyzes the formation of 3-(4-aminophenyl)pyruvate from 4-amino-4-deoxyprephenate. The sequence is that of 4-amino-4-deoxyprephenate dehydrogenase from Streptomyces pristinaespiralis.